The primary structure comprises 1535 residues: MKPEEIRVNGKEIFKDEEEEDKDLFWFEKPLVTLLFDYKRWNRPLRYIKNDRFENAVSNKMSQYFFHTCPSDGKKIISFTYPPSLSTIEEIIQKRMSLYTTEKGSPEDLYNNWVYTNKKKKNNLSNELINRIEAIEKGSVSIDVLEKRIRLCHDENEQKCLPKWYDPFFNGPYRGTITKVDSQNEDEHFGEMTWKKKIYDIPHKLKNSQEFEEKRNTFHFNRKLLSTDSNNLFTPIGEFDEELASSFYLKEIFLDSEKKSLYSENQKKNGKQPVDTIKNNSNDQALRKHEIEIEKMNKKLPRWSYKLIDDLEQQEEENPEESTGNPGIRSRKAKRVVIYTDKDQNIHTDTSTDSDQAEEIALIRYSQQSDFRRDLIKGSMRSQRRKTLILEMFQANAHPPLFLDRLNKTSFSFNFSKMSMGKELEFKTANSENAEKREAVIKEKTDKSDRLAIAETWDSVTFAQPIRGCILVAQSIVRKYIILPTLIIGKNLGRILFWQSPEWDEDFHEWKKEMHIKCTYNGVQLSETEFPKAWLTDGIQIKILFPFSLKPWHRSKQTSLQVDPIKVKKQNFCFLTVWGRETEQPFGPPRKNPPFFKPILKELKKEMINRFFRVPKTLKNGTKGFMKVEKEKTTLIIQIVFFLKRKMKEFLFVFVKVNPTPLVRSQKIYESNENEKNSILSNKITYESNIQKKSTIDLKNLSLTEKKIKDLSDHTSIIRNQIERVAKDKKRIYLISDRNPSTGETGWYDKDKGRESKKGIWQIFKKRSTRLIRKWPYFLKSLIQKIYTETLLFTISSTDDYAKFFIESTKKSLNKHIYNDEKDKRVIDEINQNTIEFISTINRSFSNITNIFNNSNKNSLTYFELFSLSQAYVFLKLSQTQVFNLYCLGSLLQYHGASTLFKKKIKDYLGSQGIFNFKLKQKKLQNSGINDWKNWLRSHYQYNLPKIRWSRIVPQKWRNRINERRTIKKKGSIFSHSYAKENDQFIYYKKQKNFRMNSLTNQKEKLKKHYRYDLSSYKYLHYEELKNSPLISRSPFQIKGGQEIPYNYNNYNRPKYESFFYVPEIIAINDYLIMGEYVFNTDKNRDRKYLDWGILNLGFKKNINIEYWTHMDTRPFSQDTRTRSNDYRVVENKNLFFLRIHQEINPSNQKNTLFDWMGMNEEMLYYSISSIEPWFFPEFVPRYDIYKIKPCIIPIKSLFLNFYGKESISKNINVNRKANHDTSSNFKKYPVFKNINQEEKEGQGQEVLRSNAQNQQKSFIEKDYKESDIQKPRTKAQSKNNKETELDSFLKKYLLFQLRWNNSLNQKVIDNIKVYSLLLRLKNPREIAISSIQRGEMRLDVMLFQKDITLSGLIKGGLLVIEPIRLYLKWDFQFFMYQIVGISLVHKDKQQIKTRCRIKEYVDKMDFDGSFLPYGKTLVKGHEKHYDLLVPEHILSPRRRRELRILMSFNSGKENIMGRGPFILNGKSVRNCEPFFYEDKYLDTDANKFIQFKFFLWPNYRLEELACMNRYWFDSNNGSRFSMLRIRMYPRHRIL.

3 disordered regions span residues 264–283 (ENQK…NSND), 312–333 (EQQE…SRKA), and 1263–1282 (DYKE…KNNK).

The protein belongs to the TIC214 family. In terms of assembly, part of the Tic complex.

The protein resides in the plastid. It localises to the chloroplast. Involved in protein precursor import into chloroplasts. May be part of an intermediate translocation complex acting as a protein-conducting channel at the inner envelope. This Piper cenocladum (Ant piper) protein is Putative protein TIC 214 C-terminal part.